A 355-amino-acid chain; its full sequence is MACLTDLVNLNLSDTTEKIIAEYIWIGGSGMDLRSKARTLPGPVTDPSKLPKWNYDGSSTGQAPGEDSEVILYPQAIFKDPFRRGNNILVMCDCYTPAGEPIPTNKRYSAAKIFSSPEVAAEEPWYGIEQEYTLLQKDTNWPLGWPIGGFPGPQGPYYCGIGAEKSFGRDIVDAHYKACLYAGINISGINGEVMPGQWEFQVGPSVGISSGDQVWVARYILERITEIAGVVVTFDPKPIPGDWNGAGAHTNYSTESMRKEGGYEVIKAAIEKLKLRHKEHIAAYGEGNERRLTGRHETADINTFSWGVANRGASVAVGQTEQNGKGYFEDRRPASNMDPYVVTSMIAETTIVWKP.

The 81-residue stretch at 19–99 (IIAEYIWIGG…VMCDCYTPAG (81 aa)) folds into the GS beta-grasp domain. Residues 37-66 (ARTLPGPVTDPSKLPKWNYDGSSTGQAPGE) form a disordered region. The 250-residue stretch at 106–355 (KRYSAAKIFS…IAETTIVWKP (250 aa)) folds into the GS catalytic domain.

Belongs to the glutamine synthetase family. Homooctamer. As to expression, found in all the tissues examined with higher expression found in tissues of the root, stem and seedling shoot.

It localises to the cytoplasm. It carries out the reaction L-glutamate + NH4(+) + ATP = L-glutamine + ADP + phosphate + H(+). Its function is as follows. Plays a role in the flow of nitrogen into nitrogenous organic compounds. This is Glutamine synthetase root isozyme 4 (GLN5) from Zea mays (Maize).